The following is a 213-amino-acid chain: Succinate dehydrogenase subunit 3-1, mitochondrial (213 aa).

The transit peptide at 1–105 directs the protein to the mitochondrion; the sequence is MAATALFRSI…LDVGTSKRLF (105 aa). Position 130 (histidine 130) interacts with heme. Residues 148 to 165 form a helical membrane-spanning segment; sequence ISGVYLTGVTFAGYLLYL.

Component of complex II composed of eight subunits in plants: four classical SDH subunits SDH1, SDH2, SDH3 and SDH4 (a flavoprotein (FP), an iron-sulfur protein (IP), and a cytochrome b composed of a large and a small subunit.), as well as four subunits unknown in mitochondria from bacteria and heterotrophic eukaryotes. Heme serves as cofactor. In terms of tissue distribution, expressed in flowers, inflorescences and stems.

It is found in the mitochondrion inner membrane. The protein operates within carbohydrate metabolism; tricarboxylic acid cycle. In terms of biological role, membrane-anchoring subunit of succinate dehydrogenase (SDH). The sequence is that of Succinate dehydrogenase subunit 3-1, mitochondrial from Arabidopsis thaliana (Mouse-ear cress).